The primary structure comprises 1183 residues: Chromosome partition protein Smc (1183 aa).

Residue 32–39 (PNGSGKSN) participates in ATP binding. Residues 162 to 483 (EEAAGIKKLQ…KLSQDIREFE (322 aa)) adopt a coiled-coil conformation. Residues 519-632 (SGIDGVLISL…VENIDIATDI (114 aa)) form the SMC hinge domain. Residues 666-1019 (INQIFERKKE…VMDLIQEIDE (354 aa)) adopt a coiled-coil conformation.

The protein belongs to the SMC family. In terms of assembly, homodimer.

It localises to the cytoplasm. Its function is as follows. Required for chromosome condensation and partitioning. The chain is Chromosome partition protein Smc from Fusobacterium nucleatum subsp. nucleatum (strain ATCC 25586 / DSM 15643 / BCRC 10681 / CIP 101130 / JCM 8532 / KCTC 2640 / LMG 13131 / VPI 4355).